The chain runs to 366 residues: Carbamoyl phosphate synthase small chain (366 aa).

Residues 1-168 (MYGILVLEDG…KETVIYNAED (168 aa)) are CPSase. Residues Ser45, Gly220, and Gly222 each contribute to the L-glutamine site. The Glutamine amidotransferase type-1 domain maps to 172–363 (RCVLIDCGVK…VELGIKFKAE (192 aa)). Cys247 acts as the Nucleophile in catalysis. The L-glutamine site is built by Leu248, Gln251, Asn289, Gly291, and Phe292. Active-site residues include His336 and Glu338.

It belongs to the CarA family. Composed of two chains; the small (or glutamine) chain promotes the hydrolysis of glutamine to ammonia, which is used by the large (or ammonia) chain to synthesize carbamoyl phosphate. Tetramer of heterodimers (alpha,beta)4.

It catalyses the reaction hydrogencarbonate + L-glutamine + 2 ATP + H2O = carbamoyl phosphate + L-glutamate + 2 ADP + phosphate + 2 H(+). The catalysed reaction is L-glutamine + H2O = L-glutamate + NH4(+). Its pathway is amino-acid biosynthesis; L-arginine biosynthesis; carbamoyl phosphate from bicarbonate: step 1/1. It functions in the pathway pyrimidine metabolism; UMP biosynthesis via de novo pathway; (S)-dihydroorotate from bicarbonate: step 1/3. In terms of biological role, small subunit of the glutamine-dependent carbamoyl phosphate synthetase (CPSase). CPSase catalyzes the formation of carbamoyl phosphate from the ammonia moiety of glutamine, carbonate, and phosphate donated by ATP, constituting the first step of 2 biosynthetic pathways, one leading to arginine and/or urea and the other to pyrimidine nucleotides. The small subunit (glutamine amidotransferase) binds and cleaves glutamine to supply the large subunit with the substrate ammonia. The sequence is that of Carbamoyl phosphate synthase small chain from Methanococcus maripaludis (strain C5 / ATCC BAA-1333).